A 115-amino-acid polypeptide reads, in one-letter code: Glycine cleavage system H-like protein (115 aa).

Residues 17 to 99 enclose the Lipoyl-binding domain; the sequence is VVRLGLTEKM…EGEGWLAVVR (83 aa). Lys-58 carries the N6-lipoyllysine modification.

It belongs to the GcvH family. It depends on (R)-lipoate as a cofactor.

The sequence is that of Glycine cleavage system H-like protein from Chlamydia pneumoniae (Chlamydophila pneumoniae).